The chain runs to 484 residues: UDP-glycosyltransferase 73B4 (484 aa).

Catalysis depends on H18, which acts as the Proton acceptor. An anthocyanidin is bound by residues H18 and N89. Catalysis depends on D129, which acts as the Charge relay. UDP-alpha-D-glucose-binding residues include A356, Q358, H373, W376, N377, S378, and E381. A396 is a binding site for an anthocyanidin. UDP-alpha-D-glucose-binding residues include E397 and Q398.

The protein belongs to the UDP-glycosyltransferase family. As to expression, specifically expressed in roots.

The catalysed reaction is a flavonol + UDP-alpha-D-glucose = a flavonol 3-O-beta-D-glucoside + UDP + H(+). Possesses quercetin 3-O-glucosyltransferase and low 7-O-glucosyltransferase activities in vitro. Also active in vitro on benzoates and benzoate derivatives. Can detoxify the explosive 2,4,6-trinitrotoluene in plant by forming O- or C-glucose conjugates. In Arabidopsis thaliana (Mouse-ear cress), this protein is UDP-glycosyltransferase 73B4 (UGT73B4).